A 436-amino-acid chain; its full sequence is UDP-N-acetylmuramate--L-alanine ligase (436 aa).

108-114 (GAHGKTS) serves as a coordination point for ATP.

Belongs to the MurCDEF family.

It is found in the cytoplasm. It carries out the reaction UDP-N-acetyl-alpha-D-muramate + L-alanine + ATP = UDP-N-acetyl-alpha-D-muramoyl-L-alanine + ADP + phosphate + H(+). It participates in cell wall biogenesis; peptidoglycan biosynthesis. Cell wall formation. The chain is UDP-N-acetylmuramate--L-alanine ligase from Bacillus cereus (strain AH187).